The chain runs to 394 residues: Upstream-binding factor 1-like protein 1 (394 aa).

Residues 101 to 169 (PKRPLTAYLR…DFQKKMRQFK (69 aa)) constitute a DNA-binding region (HMG box 1). Residues 167–180 (QFKKRHPVSGHPKK) are compositionally biased toward basic residues. A disordered region spans residues 167-197 (QFKKRHPVSGHPKKSVVPQSHPTKVPTKSQG). Over residues 183-197 (VPQSHPTKVPTKSQG) the composition is skewed to polar residues. The segment at residues 225 to 291 (RKPPMNAYHK…QYRVKLDLWL (67 aa)) is a DNA-binding region (HMG box 2). The segment at 305–394 (AKATCGKRKN…SDSSSTDEDD (90 aa)) is disordered.

Its subcellular location is the cytoplasm. The protein resides in the nucleus. Functionally, essential for proliferation of the inner cell mass and trophectodermal cells in peri-implantation development. The protein is Upstream-binding factor 1-like protein 1 of Mus musculus (Mouse).